We begin with the raw amino-acid sequence, 285 residues long: ATP phosphoribosyltransferase (285 aa).

This sequence belongs to the ATP phosphoribosyltransferase family. Long subfamily. Mg(2+) is required as a cofactor.

The protein resides in the cytoplasm. It carries out the reaction 1-(5-phospho-beta-D-ribosyl)-ATP + diphosphate = 5-phospho-alpha-D-ribose 1-diphosphate + ATP. Its pathway is amino-acid biosynthesis; L-histidine biosynthesis; L-histidine from 5-phospho-alpha-D-ribose 1-diphosphate: step 1/9. Feedback inhibited by histidine. Functionally, catalyzes the condensation of ATP and 5-phosphoribose 1-diphosphate to form N'-(5'-phosphoribosyl)-ATP (PR-ATP). Has a crucial role in the pathway because the rate of histidine biosynthesis seems to be controlled primarily by regulation of HisG enzymatic activity. This Streptomyces avermitilis (strain ATCC 31267 / DSM 46492 / JCM 5070 / NBRC 14893 / NCIMB 12804 / NRRL 8165 / MA-4680) protein is ATP phosphoribosyltransferase.